A 372-amino-acid chain; its full sequence is Dual-specificity RNA methyltransferase RlmN (372 aa).

Glu-97 (proton acceptor) is an active-site residue. Residues 103–340 form the Radical SAM core domain; sequence ETDRKTLCVS…AVVRKNRGTD (238 aa). Residues Cys-110 and Cys-345 are joined by a disulfide bond. [4Fe-4S] cluster-binding residues include Cys-117, Cys-121, and Cys-124. S-adenosyl-L-methionine-binding positions include 172 to 173, Ser-204, 226 to 228, and Asn-302; these read GE and SLN. The active-site S-methylcysteine intermediate is Cys-345. Positions 350 to 372 are disordered; the sequence is AEGGPGDPRRRAAAALTGTPAAG. Over residues 362-372 the composition is skewed to low complexity; that stretch reads AAALTGTPAAG.

It belongs to the radical SAM superfamily. RlmN family. It depends on [4Fe-4S] cluster as a cofactor.

It localises to the cytoplasm. The enzyme catalyses adenosine(2503) in 23S rRNA + 2 reduced [2Fe-2S]-[ferredoxin] + 2 S-adenosyl-L-methionine = 2-methyladenosine(2503) in 23S rRNA + 5'-deoxyadenosine + L-methionine + 2 oxidized [2Fe-2S]-[ferredoxin] + S-adenosyl-L-homocysteine. It carries out the reaction adenosine(37) in tRNA + 2 reduced [2Fe-2S]-[ferredoxin] + 2 S-adenosyl-L-methionine = 2-methyladenosine(37) in tRNA + 5'-deoxyadenosine + L-methionine + 2 oxidized [2Fe-2S]-[ferredoxin] + S-adenosyl-L-homocysteine. Its function is as follows. Specifically methylates position 2 of adenine 2503 in 23S rRNA and position 2 of adenine 37 in tRNAs. m2A2503 modification seems to play a crucial role in the proofreading step occurring at the peptidyl transferase center and thus would serve to optimize ribosomal fidelity. The protein is Dual-specificity RNA methyltransferase RlmN of Anaeromyxobacter dehalogenans (strain 2CP-C).